The chain runs to 508 residues: Photosystem II CP47 reaction center protein (508 aa).

Helical transmembrane passes span 21–36 (SVHI…WAGS), 101–115 (IVFS…IWHW), 140–156 (GIHL…FGAF), 203–218 (IAAG…FHLS), 237–252 (VLSS…AFVV), and 457–472 (TFAL…HGAR).

This sequence belongs to the PsbB/PsbC family. PsbB subfamily. PSII is composed of 1 copy each of membrane proteins PsbA, PsbB, PsbC, PsbD, PsbE, PsbF, PsbH, PsbI, PsbJ, PsbK, PsbL, PsbM, PsbT, PsbX, PsbY, PsbZ, Psb30/Ycf12, at least 3 peripheral proteins of the oxygen-evolving complex and a large number of cofactors. It forms dimeric complexes. Requires Binds multiple chlorophylls. PSII binds additional chlorophylls, carotenoids and specific lipids. as cofactor.

It localises to the plastid. The protein localises to the chloroplast thylakoid membrane. In terms of biological role, one of the components of the core complex of photosystem II (PSII). It binds chlorophyll and helps catalyze the primary light-induced photochemical processes of PSII. PSII is a light-driven water:plastoquinone oxidoreductase, using light energy to abstract electrons from H(2)O, generating O(2) and a proton gradient subsequently used for ATP formation. In Oryza nivara (Indian wild rice), this protein is Photosystem II CP47 reaction center protein.